The primary structure comprises 308 residues: Oxygen-dependent coproporphyrinogen-III oxidase (308 aa).

Serine 100 is a binding site for substrate. A divalent metal cation-binding residues include histidine 104 and histidine 114. Histidine 114 acts as the Proton donor in catalysis. Substrate is bound at residue 116–118; the sequence is NFR. Positions 153 and 183 each coordinate a divalent metal cation. Residues 248–283 form an important for dimerization region; the sequence is YVEFNLVFDRGTIFGLQSGGRTESILSSMPPMATWK. 266–268 contacts substrate; it reads GGR.

It belongs to the aerobic coproporphyrinogen-III oxidase family. In terms of assembly, homodimer. It depends on a divalent metal cation as a cofactor.

It localises to the cytoplasm. It catalyses the reaction coproporphyrinogen III + O2 + 2 H(+) = protoporphyrinogen IX + 2 CO2 + 2 H2O. Its pathway is porphyrin-containing compound metabolism; protoporphyrin-IX biosynthesis; protoporphyrinogen-IX from coproporphyrinogen-III (O2 route): step 1/1. In terms of biological role, involved in the heme biosynthesis. Catalyzes the aerobic oxidative decarboxylation of propionate groups of rings A and B of coproporphyrinogen-III to yield the vinyl groups in protoporphyrinogen-IX. This is Oxygen-dependent coproporphyrinogen-III oxidase from Francisella tularensis subsp. holarctica (strain FTNF002-00 / FTA).